Reading from the N-terminus, the 428-residue chain is GTPase Obg (428 aa).

One can recognise an Obg domain in the interval 1-158 (MFIDEVIITV…IKVKLELKLL (158 aa)). In terms of domain architecture, OBG-type G spans 159-330 (ADVALVGYPS…ILYKTYDMLS (172 aa)). Residues 165 to 172 (GYPSVGKS), 190 to 194 (FTTLE), 212 to 215 (DIPG), 282 to 285 (NKMD), and 311 to 313 (SVL) contribute to the GTP site. Residues S172 and T192 each coordinate Mg(2+). The region spanning 349–428 (ELKIEKEDFE…IADVEFEYFE (80 aa)) is the OCT domain.

It belongs to the TRAFAC class OBG-HflX-like GTPase superfamily. OBG GTPase family. As to quaternary structure, monomer. The cofactor is Mg(2+).

The protein localises to the cytoplasm. Its function is as follows. An essential GTPase which binds GTP, GDP and possibly (p)ppGpp with moderate affinity, with high nucleotide exchange rates and a fairly low GTP hydrolysis rate. Plays a role in control of the cell cycle, stress response, ribosome biogenesis and in those bacteria that undergo differentiation, in morphogenesis control. The sequence is that of GTPase Obg from Fusobacterium nucleatum subsp. nucleatum (strain ATCC 25586 / DSM 15643 / BCRC 10681 / CIP 101130 / JCM 8532 / KCTC 2640 / LMG 13131 / VPI 4355).